We begin with the raw amino-acid sequence, 313 residues long: Glycine--tRNA ligase alpha subunit (313 aa).

Belongs to the class-II aminoacyl-tRNA synthetase family. As to quaternary structure, tetramer of two alpha and two beta subunits.

The protein resides in the cytoplasm. It carries out the reaction tRNA(Gly) + glycine + ATP = glycyl-tRNA(Gly) + AMP + diphosphate. In Leuconostoc mesenteroides subsp. mesenteroides (strain ATCC 8293 / DSM 20343 / BCRC 11652 / CCM 1803 / JCM 6124 / NCDO 523 / NBRC 100496 / NCIMB 8023 / NCTC 12954 / NRRL B-1118 / 37Y), this protein is Glycine--tRNA ligase alpha subunit.